The following is a 125-amino-acid chain: Large ribosomal subunit protein bL12 (125 aa).

This sequence belongs to the bacterial ribosomal protein bL12 family. As to quaternary structure, homodimer. Part of the ribosomal stalk of the 50S ribosomal subunit. Forms a multimeric L10(L12)X complex, where L10 forms an elongated spine to which 2 to 4 L12 dimers bind in a sequential fashion. Binds GTP-bound translation factors.

Its function is as follows. Forms part of the ribosomal stalk which helps the ribosome interact with GTP-bound translation factors. Is thus essential for accurate translation. This Gluconobacter oxydans (strain 621H) (Gluconobacter suboxydans) protein is Large ribosomal subunit protein bL12.